The sequence spans 109 residues: RYamide neuropeptides (109 aa).

The N-terminal stretch at Met1–Gln22 is a signal peptide. A Tyrosine amide modification is found at Tyr33. Residues Ser36 to Arg53 constitute a propeptide that is removed on maturation. A Tyrosine amide modification is found at Tyr63. Positions Ser67–Thr109 are excised as a propeptide.

It is found in the secreted. Neuropeptides RYamide-1 and RYamide-2 are ligands for the G-protein coupled receptor RYa-R. May suppress feeding behavior. The polypeptide is RYamide neuropeptides (Drosophila melanogaster (Fruit fly)).